We begin with the raw amino-acid sequence, 324 residues long: NADH-quinone oxidoreductase subunit H 2 (324 aa).

A run of 9 helical transmembrane segments spans residues 1–21 (MIGM…LLVV), 77–97 (ILAP…VAFG), 109–129 (VMFL…GALA), 147–167 (LGYE…AGSL), 179–199 (VWFV…GVAA), 214–234 (LVAG…FLGE), 238–258 (VLLV…GPVW), 263–283 (LPGP…FIWI), and 298–318 (FAWK…GLIV).

It belongs to the complex I subunit 1 family. NDH-1 is composed of 14 different subunits. Subunits NuoA, H, J, K, L, M, N constitute the membrane sector of the complex.

Its subcellular location is the cell inner membrane. The catalysed reaction is a quinone + NADH + 5 H(+)(in) = a quinol + NAD(+) + 4 H(+)(out). Its function is as follows. NDH-1 shuttles electrons from NADH, via FMN and iron-sulfur (Fe-S) centers, to quinones in the respiratory chain. The immediate electron acceptor for the enzyme in this species is believed to be ubiquinone. Couples the redox reaction to proton translocation (for every two electrons transferred, four hydrogen ions are translocated across the cytoplasmic membrane), and thus conserves the redox energy in a proton gradient. This subunit may bind ubiquinone. This is NADH-quinone oxidoreductase subunit H 2 from Rhodopseudomonas palustris (strain BisB18).